Reading from the N-terminus, the 223-residue chain is MKRTKSIHHASFRKSWGARHLTPVALAVTAVFMLAGCEKSDETVSLYQNADDCSAANPGKSAECTTAYNNALKEAERTAPKYATREDCVAEFGEGQCQQAPAQAGMAPENQAQAQQSSGSFWMPLMAGYMMGRLMGGGAGFAQQPLFSSKNPASPAYGKYTDAAGKNYGAAQPGRTMTVPKTAMAPKPATTTTVTRGGFGESVAKQSTMQRSAAGTSTRSMGG.

The span at 178–195 shows a compositional bias: low complexity; that stretch reads TVPKTAMAPKPATTTTVT. The segment at 178 to 223 is disordered; sequence TVPKTAMAPKPATTTTVTRGGFGESVAKQSTMQRSAAGTSTRSMGG. Residues 204–223 show a composition bias toward polar residues; sequence AKQSTMQRSAAGTSTRSMGG.

It belongs to the UPF0441 family.

This Salmonella heidelberg (strain SL476) protein is UPF0441 protein YgiB.